Reading from the N-terminus, the 894-residue chain is LRR receptor-like serine/threonine-protein kinase IOS1 (894 aa).

The N-terminal stretch at 1 to 23 (MAFSSCFLLVLLQIFSALLLCLA) is a signal peptide. The Extracellular segment spans residues 24-515 (QDQSGFISLD…KKKKNTVIAP (492 aa)). N-linked (GlcNAc...) asparagine glycans are attached at residues Asn-48, Asn-95, Asn-137, Asn-179, Asn-223, Asn-230, Asn-260, Asn-287, Asn-309, Asn-338, Asn-399, Asn-441, Asn-462, and Asn-469. LRR repeat units lie at residues 431–457 (LTSL…NMET) and 459–479 (KLIN…LLDK). Residues 516-536 (VAASLVSVFLIGAGIVTFLIL) traverse the membrane as a helical segment. At 537-894 (KRKKRTKLGL…FTTELNPGAR (358 aa)) the chain is on the cytoplasmic side. Thr-577 is modified (phosphothreonine). A Protein kinase domain is found at 586–858 (NNFERVLGRG…QVVMDLKECL (273 aa)). ATP-binding positions include 592–600 (LGRGGFGVV) and Lys-613. A Phosphotyrosine modification is found at Tyr-658. The active-site Proton acceptor is Asp-710. Ser-744 is subject to Phosphoserine. Thr-745 and Thr-750 each carry phosphothreonine. Residue Tyr-758 is modified to Phosphotyrosine.

This sequence belongs to the protein kinase superfamily. Ser/Thr protein kinase family. In terms of assembly, homodimerization. Interacts with BAK1 and FLS2; triggers FLS2-BAK1 complex formation upon microbe-associated molecular patterns (MAMPs) treatment. Also binds to CERK1 and EFR. Expressed in roots, cotyledons, leaves, flowers and siliques.

It localises to the cell membrane. Its function is as follows. Negatively regulates the abscisic acid (ABA) signaling pathway. Required for full susceptibility to filamentous (hemi)biotrophic oomycetes (e.g. H.arabidopsidis and P.parasitica) and fungal (e.g. E.cruciferarum) pathogens, probably by triggering the repression of ABA-sensitive COLD REGULATED and RESISTANCE TO DESICCATION genes during infection, but independently of immune responses. Involved in BAK1-dependent and BAK1-independent microbe-associated molecular patterns (MAMPs)-triggered immunity (PTI) leading to defense responses, including callose deposition and MAPK cascade activation, toward pathogenic bacteria (e.g. P.syringae). Required for chitin-mediated PTI. In Arabidopsis thaliana (Mouse-ear cress), this protein is LRR receptor-like serine/threonine-protein kinase IOS1.